An 828-amino-acid chain; its full sequence is DNA gyrase subunit A (828 aa).

In terms of domain architecture, Topo IIA-type catalytic spans 32–497; the sequence is LPDVRDGLKP…EVLSLEDEDL (466 aa). The active-site O-(5'-phospho-DNA)-tyrosine intermediate is the Tyr-120. A GyrA-box motif is present at residues 524 to 530; sequence QKRGGRG.

The protein belongs to the type II topoisomerase GyrA/ParC subunit family. Heterotetramer, composed of two GyrA and two GyrB chains. In the heterotetramer, GyrA contains the active site tyrosine that forms a transient covalent intermediate with DNA, while GyrB binds cofactors and catalyzes ATP hydrolysis.

The protein resides in the cytoplasm. The catalysed reaction is ATP-dependent breakage, passage and rejoining of double-stranded DNA.. A type II topoisomerase that negatively supercoils closed circular double-stranded (ds) DNA in an ATP-dependent manner to modulate DNA topology and maintain chromosomes in an underwound state. Negative supercoiling favors strand separation, and DNA replication, transcription, recombination and repair, all of which involve strand separation. Also able to catalyze the interconversion of other topological isomers of dsDNA rings, including catenanes and knotted rings. Type II topoisomerases break and join 2 DNA strands simultaneously in an ATP-dependent manner. This chain is DNA gyrase subunit A, found in Streptococcus pyogenes serotype M1.